The chain runs to 429 residues: 3-phosphoshikimate 1-carboxyvinyltransferase (429 aa).

3-phosphoshikimate is bound by residues Lys23, Ser24, and Arg28. Residue Lys23 participates in phosphoenolpyruvate binding. Residues Gly95 and Arg123 each contribute to the phosphoenolpyruvate site. 4 residues coordinate 3-phosphoshikimate: Ser168, Gln170, Asp316, and Lys343. Gln170 contributes to the phosphoenolpyruvate binding site. Residue Asp316 is the Proton acceptor of the active site. Residues Arg347 and Arg389 each contribute to the phosphoenolpyruvate site.

It belongs to the EPSP synthase family. Monomer.

It localises to the cytoplasm. It carries out the reaction 3-phosphoshikimate + phosphoenolpyruvate = 5-O-(1-carboxyvinyl)-3-phosphoshikimate + phosphate. It participates in metabolic intermediate biosynthesis; chorismate biosynthesis; chorismate from D-erythrose 4-phosphate and phosphoenolpyruvate: step 6/7. Functionally, catalyzes the transfer of the enolpyruvyl moiety of phosphoenolpyruvate (PEP) to the 5-hydroxyl of shikimate-3-phosphate (S3P) to produce enolpyruvyl shikimate-3-phosphate and inorganic phosphate. The sequence is that of 3-phosphoshikimate 1-carboxyvinyltransferase from Bacillus cereus (strain ZK / E33L).